Consider the following 441-residue polypeptide: MENNSHNVDERRAARMRGAERYKIQNVEFSLDQNLLANLESSTSSSTRSSPASNQQNLEIVSQSEAYHKISDLDDSTSIFSISDQENILERRISEEVVRENSVSSIENVSSSAVARETQSSANILVKDNHFFSHKQKKIQRESIPFHKRDNIETSDAYSSSILENSPPNKVQRLSSLDSSQDSFQEEHPGNVTGTTFSSQAPEERIASPISTSSPESLTNQSSSLQSSLQTSSMAPRNLLDQSTEKDIVVGASDELVRIELTKLSKEAGGSKTLNELDAVQQFFQEFIKENEPLEPYVVKVKNAFVEQVSIRLLELIDLLDANRILSTACKKAANEKLAVQRDLSKLREDRLSVQRKKIQLRNEYIKLSHQQNFLDDIDDFFSQCETVKNELENVTTTPNSTEAFSEINEYASALSKNYGLESQLVELQSLLTQFYQKFLS.

Positions 160-173 are enriched in polar residues; it reads SSILENSPPNKVQR. The segment at 160–240 is disordered; it reads SSILENSPPN…TSSMAPRNLL (81 aa). The segment covering 174-183 has biased composition (low complexity); sequence LSSLDSSQDS. The segment covering 192-201 has biased composition (polar residues); the sequence is VTGTTFSSQA. Over residues 217 to 233 the composition is skewed to low complexity; sequence SLTNQSSSLQSSLQTSS.

The protein belongs to the CENP-U/AME1 family. In terms of assembly, component of the heterotetrameric kinetochore subcomplex COMA, which consists of fta2, fta7, mal2 and mis17. The COMA subcomplex is part of a larger constitutive centromere-associated network (CCAN) (also known as central kinetochore Sim4 complex in fission yeast), which is composed of at least cnl2, cnp3, cnp20, fta1, fta2, fta3, fta4, fta6, fta7, mal2, mhf1, mhf2, mis6, mis15, mis17, sim4 and wip1. Interacts with mis6 and mis15.

The protein localises to the nucleus. Its subcellular location is the chromosome. It localises to the centromere. It is found in the kinetochore. In terms of biological role, component of the kinetochore, a multiprotein complex that assembles on centromeric DNA and attaches chromosomes to spindle microtubules, mediating chromosome segregation and sister chromatid segregation during meiosis and mitosis. Component of the inner kinetochore COMA complex, which connects centromere-associated proteins and the outer kinetochore. COMA interacts with other inner kinetochore proteins to form the inner kinetochore constitutive centromere-associated network (CCAN), which serves as a structural platform for outer kinetochore assembly. This Schizosaccharomyces pombe (strain 972 / ATCC 24843) (Fission yeast) protein is Inner kinetochore subunit mis17 (mis17).